The following is a 218-amino-acid chain: 3-dehydroquinate dehydratase (218 aa).

3-dehydroquinate contacts are provided by residues 29–31 (EFR) and R56. The active-site Proton donor/acceptor is the H116. Residue K142 is the Schiff-base intermediate with substrate of the active site. 3-dehydroquinate contacts are provided by R180, S200, and Q204.

Belongs to the type-I 3-dehydroquinase family. As to quaternary structure, homodimer.

It carries out the reaction 3-dehydroquinate = 3-dehydroshikimate + H2O. Its pathway is metabolic intermediate biosynthesis; chorismate biosynthesis; chorismate from D-erythrose 4-phosphate and phosphoenolpyruvate: step 3/7. In terms of biological role, involved in the third step of the chorismate pathway, which leads to the biosynthesis of aromatic amino acids. Catalyzes the cis-dehydration of 3-dehydroquinate (DHQ) and introduces the first double bond of the aromatic ring to yield 3-dehydroshikimate. The sequence is that of 3-dehydroquinate dehydratase from Methanococcus vannielii (strain ATCC 35089 / DSM 1224 / JCM 13029 / OCM 148 / SB).